Here is a 311-residue protein sequence, read N- to C-terminus: Exosome complex component Rrp4 (311 aa).

Residues 63-131 form the S1 motif domain; that stretch reads GDVVIGEITD…EVKKVKLGLK (69 aa). Positions 139–197 constitute a KH domain; it reads RDGILVYITPTKVPRLIGKRGSMINMVKEKTHCDIVVGQNGVVWIKGEPDMERIAEKVV. The interval 222-311 is disordered; that stretch reads GVEPEIQVEE…EVKDENNSER (90 aa). Positions 241-300 are enriched in acidic residues; it reads PESEDFEEASDYSEDVEVSPESEDIEEVSDESEDLEVESEDVEEGTDTPAAEEDDGEAGD. The segment covering 301-311 has biased composition (basic and acidic residues); that stretch reads AEVKDENNSER.

Belongs to the RRP4 family. As to quaternary structure, component of the archaeal exosome complex. Forms a trimer of Rrp4 and/or Csl4 subunits. The trimer associates with a hexameric ring-like arrangement composed of 3 Rrp41-Rrp42 heterodimers.

It is found in the cytoplasm. Non-catalytic component of the exosome, which is a complex involved in RNA degradation. Increases the RNA binding and the efficiency of RNA degradation. Confers strong poly(A) specificity to the exosome. This chain is Exosome complex component Rrp4, found in Methanothermobacter thermautotrophicus (strain ATCC 29096 / DSM 1053 / JCM 10044 / NBRC 100330 / Delta H) (Methanobacterium thermoautotrophicum).